A 1103-amino-acid polypeptide reads, in one-letter code: DNA polymerase delta catalytic subunit (1103 aa).

A disordered region spans residues 1-29 (MDFKRRQGPGPGVPPKRARGGLWDEDEPS). The Nuclear localization signal signature appears at 4–19 (KRRQGPGPGVPPKRAR). R19 carries the post-translational modification Omega-N-methylarginine. K570 is covalently cross-linked (Glycyl lysine isopeptide (Lys-Gly) (interchain with G-Cter in SUMO2)). Zn(2+) is bound by residues C1008, C1011, C1022, and C1025. The CysA-type zinc finger occupies 1008-1025 (CIGCRSVINHQGAVCEFC). C1054, C1057, C1067, and C1072 together coordinate [4Fe-4S] cluster. The short motif at 1054 to 1072 (CQRCQGSLHEDVICTSRDC) is the CysB motif element.

Belongs to the DNA polymerase type-B family. In terms of assembly, component of the tetrameric DNA polymerase delta complex (Pol-delta4), which consists of POLD1/p125, POLD2/p50, POLD3/p66/p68 and POLD4/p12, with POLD1 bearing both DNA polymerase and 3' to 5' proofreading exonuclease activities. Within Pol-delta4, directly interacts with POLD2 and POLD4. Following genotoxic stress by DNA-damaging agents, such as ultraviolet light and methyl methanesulfonate, or by replication stress induced by treatment with hydroxyurea or aphidicolin, Pol-delta4 is converted into a trimeric form of the complex (Pol-delta3) by POLD4 degradation. Pol-delta3 is the major form at S phase replication sites and DNA damage sites. POLD1 displays different catalytic properties depending upon the complex it is found in. It exhibits higher proofreading activity and fidelity than Pol-delta4, making it particularly well suited to respond to DNA damage. Directly interacts with PCNA, as do POLD3 and POLD4; this interaction stimulates Pol-delta4 polymerase activity. As POLD2 and POLD4, directly interacts with WRNIP1; this interaction stimulates DNA polymerase delta-mediated DNA synthesis, independently of the presence of PCNA. This stimulation may be due predominantly to an increase of initiation frequency and also to increased processivity. Also observed as a dimeric complex with POLD2 (Pol-delta2). Pol-delta2 is relatively insensitive to the PCNA stimulation (2-5-fold) compared to Pol-delta4 that is stimulated by over 50-fold. The DNA polymerase delta complex interacts with POLDIP2; this interaction is probably mediated through direct binding to POLD2. Interacts with CIAO1. Interacts with POLDIP2. Interacts with RFC1. The cofactor is [4Fe-4S] cluster.

It localises to the nucleus. The enzyme catalyses DNA(n) + a 2'-deoxyribonucleoside 5'-triphosphate = DNA(n+1) + diphosphate. With respect to regulation, regulated by alteration of quaternary structure. Exhibits burst rates of DNA synthesis are about 5 times faster in the presence of POLD4 (Pol-delta4 complex) than in its absence (Pol-delta3 complex), while the affinity of the enzyme for its DNA and dNTP substrates appears unchanged. The Pol-delta3 complex is more likely to proofread DNA synthesis because it cleaves single-stranded DNA twice as fast and transfers mismatched DNA from the polymerase to the exonuclease sites 9 times faster compared to the Pol-delta3 complex. Pol-delta3 also extends mismatched primers 3 times more slowly in the absence of POLD4. The conversion of Pol-delta4 into Pol-delta3 is induced by genotoxic stress or by replication stress leading POLD4 degradation. Stimulated in the presence of PCNA. This stimulation is further increased in the presence of KCTD13/PDIP1, most probably via direct interaction between KCTD13 and POLD2. In terms of biological role, as the catalytic component of the trimeric (Pol-delta3 complex) and tetrameric DNA polymerase delta complexes (Pol-delta4 complex), plays a crucial role in high fidelity genome replication, including in lagging strand synthesis, and repair. Exhibits both DNA polymerase and 3'- to 5'-exonuclease activities. Requires the presence of accessory proteins POLD2, POLD3 and POLD4 for full activity. Depending upon the absence (Pol-delta3) or the presence of POLD4 (Pol-delta4), displays differences in catalytic activity. Most notably, expresses higher proofreading activity in the context of Pol-delta3 compared with that of Pol-delta4. Although both Pol-delta3 and Pol-delta4 process Okazaki fragments in vitro, Pol-delta3 may be better suited to fulfill this task, exhibiting near-absence of strand displacement activity compared to Pol-delta4 and stalling on encounter with the 5'-blocking oligonucleotides. Pol-delta3 idling process may avoid the formation of a gap, while maintaining a nick that can be readily ligated. Along with DNA polymerase kappa, DNA polymerase delta carries out approximately half of nucleotide excision repair (NER) synthesis following UV irradiation. Under conditions of DNA replication stress, in the presence of POLD3 and POLD4, may catalyze the repair of broken replication forks through break-induced replication (BIR). Involved in the translesion synthesis (TLS) of templates carrying O6-methylguanine, 8oxoG or abasic sites. This is DNA polymerase delta catalytic subunit (POLD1) from Mesocricetus auratus (Golden hamster).